The chain runs to 253 residues: Adenylate kinase (253 aa).

15 to 20 contacts ATP; it reads GSGKGT. An NMP region spans residues 35–64; sequence SSGDLLRNAVSQNTPLGQEIKSYLDQGKLL. AMP contacts are provided by residues serine 36, arginine 41, 62 to 64, 103 to 106, and glutamine 110; these read KLL and GFPR. Residues 143–176 form an LID region; the sequence is SRYICPSCQGIYNKQQGFSRCPKCLVELTRRSDD. Arginine 144 serves as a coordination point for ATP. Positions 147 and 150 each coordinate Zn(2+). ATP is bound at residue 153-154; that stretch reads IY. Zn(2+)-binding residues include cysteine 163 and cysteine 166. Residues arginine 173 and arginine 184 each coordinate AMP. Alanine 212 lines the ATP pocket.

The protein belongs to the adenylate kinase family. Monomer.

The protein resides in the cytoplasm. It catalyses the reaction AMP + ATP = 2 ADP. It participates in purine metabolism; AMP biosynthesis via salvage pathway; AMP from ADP: step 1/1. Catalyzes the reversible transfer of the terminal phosphate group between ATP and AMP. Plays an important role in cellular energy homeostasis and in adenine nucleotide metabolism. The protein is Adenylate kinase of Chlamydia muridarum (strain MoPn / Nigg).